The chain runs to 458 residues: Bifunctional protein GlmU (458 aa).

The pyrophosphorylase stretch occupies residues 1–229; sequence MKEKALSIVI…FMEVEGVNNR (229 aa). UDP-N-acetyl-alpha-D-glucosamine contacts are provided by residues 11 to 14, Lys25, Gln76, 81 to 82, 103 to 105, Gly140, Glu154, Asn169, and Asn227; these read LAAG, GT, and YGD. Residue Asp105 coordinates Mg(2+). Asn227 is a binding site for Mg(2+). The tract at residues 230–250 is linker; it reads QQLARLERYYQRKQADNLLLA. The interval 251–458 is N-acetyltransferase; the sequence is GVALADPERF…WQRPTKQTKK (208 aa). 2 residues coordinate UDP-N-acetyl-alpha-D-glucosamine: Arg333 and Lys351. The active-site Proton acceptor is the His363. 2 residues coordinate UDP-N-acetyl-alpha-D-glucosamine: Tyr366 and Asn377. Acetyl-CoA contacts are provided by residues Ala380, 386 to 387, Ser405, Ala423, and Arg440; that span reads NY.

In the N-terminal section; belongs to the N-acetylglucosamine-1-phosphate uridyltransferase family. This sequence in the C-terminal section; belongs to the transferase hexapeptide repeat family. In terms of assembly, homotrimer. It depends on Mg(2+) as a cofactor.

The protein resides in the cytoplasm. The catalysed reaction is alpha-D-glucosamine 1-phosphate + acetyl-CoA = N-acetyl-alpha-D-glucosamine 1-phosphate + CoA + H(+). It catalyses the reaction N-acetyl-alpha-D-glucosamine 1-phosphate + UTP + H(+) = UDP-N-acetyl-alpha-D-glucosamine + diphosphate. It functions in the pathway nucleotide-sugar biosynthesis; UDP-N-acetyl-alpha-D-glucosamine biosynthesis; N-acetyl-alpha-D-glucosamine 1-phosphate from alpha-D-glucosamine 6-phosphate (route II): step 2/2. The protein operates within nucleotide-sugar biosynthesis; UDP-N-acetyl-alpha-D-glucosamine biosynthesis; UDP-N-acetyl-alpha-D-glucosamine from N-acetyl-alpha-D-glucosamine 1-phosphate: step 1/1. Its pathway is bacterial outer membrane biogenesis; LPS lipid A biosynthesis. In terms of biological role, catalyzes the last two sequential reactions in the de novo biosynthetic pathway for UDP-N-acetylglucosamine (UDP-GlcNAc). The C-terminal domain catalyzes the transfer of acetyl group from acetyl coenzyme A to glucosamine-1-phosphate (GlcN-1-P) to produce N-acetylglucosamine-1-phosphate (GlcNAc-1-P), which is converted into UDP-GlcNAc by the transfer of uridine 5-monophosphate (from uridine 5-triphosphate), a reaction catalyzed by the N-terminal domain. In Pasteurella multocida (strain Pm70), this protein is Bifunctional protein GlmU.